Reading from the N-terminus, the 612-residue chain is Elongation factor 4 (612 aa).

In terms of domain architecture, tr-type G spans 11–193 (KHIRNFSIVA…EIVKKVPAPN (183 aa)). Residues 23–28 (DHGKST) and 140–143 (NKID) each bind GTP.

This sequence belongs to the TRAFAC class translation factor GTPase superfamily. Classic translation factor GTPase family. LepA subfamily.

The protein resides in the cell membrane. It catalyses the reaction GTP + H2O = GDP + phosphate + H(+). In terms of biological role, required for accurate and efficient protein synthesis under certain stress conditions. May act as a fidelity factor of the translation reaction, by catalyzing a one-codon backward translocation of tRNAs on improperly translocated ribosomes. Back-translocation proceeds from a post-translocation (POST) complex to a pre-translocation (PRE) complex, thus giving elongation factor G a second chance to translocate the tRNAs correctly. Binds to ribosomes in a GTP-dependent manner. The polypeptide is Elongation factor 4 (Lactobacillus gasseri (strain ATCC 33323 / DSM 20243 / BCRC 14619 / CIP 102991 / JCM 1131 / KCTC 3163 / NCIMB 11718 / NCTC 13722 / AM63)).